A 154-amino-acid chain; its full sequence is Ribonuclease H (154 aa).

The RNase H type-1 domain occupies Glu-5 to Asp-146. Residues Asp-14, Glu-52, Asp-74, and Asp-138 each coordinate Mg(2+).

It belongs to the RNase H family. In terms of assembly, monomer. Requires Mg(2+) as cofactor.

It localises to the cytoplasm. It carries out the reaction Endonucleolytic cleavage to 5'-phosphomonoester.. Endonuclease that specifically degrades the RNA of RNA-DNA hybrids. This is Ribonuclease H from Coxiella burnetii (strain CbuG_Q212) (Coxiella burnetii (strain Q212)).